The chain runs to 265 residues: Mlc titration factor A (265 aa).

Residues His-111, His-148, His-152, and Glu-211 each contribute to the Zn(2+) site.

Belongs to the MtfA family. Interacts with Mlc. It depends on Zn(2+) as a cofactor.

The protein resides in the cytoplasm. Involved in the modulation of the activity of the glucose-phosphotransferase system (glucose-PTS). Interacts with the transcriptional repressor Mlc, preventing its interaction with DNA and leading to the modulation of expression of genes regulated by Mlc, including ptsG, which encodes the PTS system glucose-specific EIICB component. Functionally, shows zinc-dependent metallopeptidase activity. The protein is Mlc titration factor A of Salmonella choleraesuis (strain SC-B67).